The chain runs to 140 residues: Transcription antitermination protein NusB (140 aa).

The protein belongs to the NusB family.

Involved in transcription antitermination. Required for transcription of ribosomal RNA (rRNA) genes. Binds specifically to the boxA antiterminator sequence of the ribosomal RNA (rrn) operons. The sequence is that of Transcription antitermination protein NusB from Pseudoalteromonas atlantica (strain T6c / ATCC BAA-1087).